Here is an 816-residue protein sequence, read N- to C-terminus: Leucine--tRNA ligase (816 aa).

A 'HIGH' region motif is present at residues 46-56 (PYPSGALHMGH). The short motif at 638 to 642 (KMSKS) is the 'KMSKS' region element. Lysine 641 serves as a coordination point for ATP.

Belongs to the class-I aminoacyl-tRNA synthetase family.

The protein resides in the cytoplasm. It carries out the reaction tRNA(Leu) + L-leucine + ATP = L-leucyl-tRNA(Leu) + AMP + diphosphate. The chain is Leucine--tRNA ligase from Xanthomonas campestris pv. campestris (strain ATCC 33913 / DSM 3586 / NCPPB 528 / LMG 568 / P 25).